The primary structure comprises 344 residues: Peroxidase 36 (344 aa).

Residues 1–28 form the signal peptide; the sequence is MNTKTVKSMAGIVLSQISLVALFPLCIC. 4 disulfides stabilise this stretch: cysteine 50–cysteine 130, cysteine 83–cysteine 88, cysteine 136–cysteine 337, and cysteine 215–cysteine 247. Histidine 81 serves as the catalytic Proton acceptor. Ca(2+)-binding residues include aspartate 82, valine 85, glycine 87, aspartate 89, and serine 91. Position 178 (proline 178) interacts with substrate. Histidine 208 contacts heme b. Residue threonine 209 participates in Ca(2+) binding. The N-linked (GlcNAc...) asparagine glycan is linked to asparagine 224. Residues aspartate 260, threonine 263, and aspartate 268 each coordinate Ca(2+).

This sequence belongs to the peroxidase family. Classical plant (class III) peroxidase subfamily. Heme b serves as cofactor. It depends on Ca(2+) as a cofactor.

The protein localises to the secreted. It catalyses the reaction 2 a phenolic donor + H2O2 = 2 a phenolic radical donor + 2 H2O. In terms of biological role, removal of H(2)O(2), oxidation of toxic reductants, biosynthesis and degradation of lignin, suberization, auxin catabolism, response to environmental stresses such as wounding, pathogen attack and oxidative stress. These functions might be dependent on each isozyme/isoform in each plant tissue. In Arabidopsis thaliana (Mouse-ear cress), this protein is Peroxidase 36 (PER36).